The following is a 191-amino-acid chain: Programmed cell death protein 6 (191 aa).

Residue Ala-2 is modified to N-acetylalanine. EF-hand domains follow at residues 23-58 (PDQS…GTWT), 59-89 (PFNP…TGVW), 90-125 (KYIT…FGYR), 126-161 (LSDQ…LQRL), and 162-191 (TDIF…FSIV). Positions 36, 38, 40, 42, and 47 each coordinate Ca(2+). Ca(2+)-binding residues include Asp-103, Asp-105, Ser-107, Met-109, and Glu-114. Residues Asp-169, Asp-171, Asp-173, and Trp-175 each coordinate Mg(2+).

As to quaternary structure, homodimer and heterodimer; heterodimerizes (via the EF-hand 5) with PEF1. Isoform 1 and isoform 2 self-associate; probably forming homodimers. Interacts with CPNE4 (via VWFA domain). Interacts with PDCD6IP; the interaction is calcium-dependent. Interacts with RBM22. Interacts with PLSCR4. Interacts with ANXA7 and TSG101. Interacts with DAPK1. Interacts with SEC31A; the interaction is calcium-dependent and promotes monoubiquitination of SEC31A. Interacts with ANXA11 (via N-terminus); the interaction is calcium-dependent. Interacts with PLSCR3 (via N-terminus); the interaction is calcium-dependent. Interacts with MCOLN1; the interaction is calcium-dependent. Interacts with KDR; the interaction is calcium-dependent. Interacts with HEBP2; the interaction is calcium-dependent. Interacts with TFG. Isoform 1: Interacts with SHISA5, leading to stabilize it. Isoform 2: Does not interact with SHISA5. Isoform 2: Does not interact with PDCD6IP, TSG101, ANXA7 and ANXA11.

The protein localises to the endoplasmic reticulum membrane. It is found in the cytoplasmic vesicle. The protein resides in the COPII-coated vesicle membrane. Its subcellular location is the cytoplasm. It localises to the nucleus. The protein localises to the endosome. In terms of biological role, calcium sensor that plays a key role in processes such as endoplasmic reticulum (ER)-Golgi vesicular transport, endosomal biogenesis or membrane repair. Acts as an adapter that bridges unrelated proteins or stabilizes weak protein-protein complexes in response to calcium: calcium-binding triggers exposure of apolar surface, promoting interaction with different sets of proteins thanks to 3 different hydrophobic pockets, leading to translocation to membranes. Involved in ER-Golgi transport by promoting the association between PDCD6IP and TSG101, thereby bridging together the ESCRT-III and ESCRT-I complexes. Together with PEF1, acts as a calcium-dependent adapter for the BCR(KLHL12) complex, a complex involved in ER-Golgi transport by regulating the size of COPII coats. In response to cytosolic calcium increase, the heterodimer formed with PEF1 interacts with, and bridges together the BCR(KLHL12) complex and SEC31 (SEC31A or SEC31B), promoting monoubiquitination of SEC31 and subsequent collagen export, which is required for neural crest specification. Involved in the regulation of the distribution and function of MCOLN1 in the endosomal pathway. Promotes localization and polymerization of TFG at endoplasmic reticulum exit site. Required for T-cell receptor-, Fas-, and glucocorticoid-induced apoptosis. May mediate Ca(2+)-regulated signals along the death pathway: interaction with DAPK1 can accelerate apoptotic cell death by increasing caspase-3 activity. Its role in apoptosis may however be indirect, as suggested by knockout experiments. May inhibit KDR/VEGFR2-dependent angiogenesis; the function involves inhibition of VEGF-induced phosphorylation of the Akt signaling pathway. In case of infection by HIV-1 virus, indirectly inhibits HIV-1 production by affecting viral Gag expression and distribution. Its function is as follows. Has a lower Ca(2+) affinity than isoform 1. This chain is Programmed cell death protein 6 (PDCD6), found in Homo sapiens (Human).